Here is a 466-residue protein sequence, read N- to C-terminus: 3-isopropylmalate dehydratase large subunit 1 (466 aa).

Positions 347, 407, and 410 each coordinate [4Fe-4S] cluster.

Belongs to the aconitase/IPM isomerase family. LeuC type 1 subfamily. In terms of assembly, heterodimer of LeuC and LeuD. Requires [4Fe-4S] cluster as cofactor.

It carries out the reaction (2R,3S)-3-isopropylmalate = (2S)-2-isopropylmalate. Its pathway is amino-acid biosynthesis; L-leucine biosynthesis; L-leucine from 3-methyl-2-oxobutanoate: step 2/4. Catalyzes the isomerization between 2-isopropylmalate and 3-isopropylmalate, via the formation of 2-isopropylmaleate. This Salmonella choleraesuis (strain SC-B67) protein is 3-isopropylmalate dehydratase large subunit 1.